Here is a 460-residue protein sequence, read N- to C-terminus: DEAD-box helicase Dbp80 (460 aa).

Position 26 is a phosphoserine (serine 26). Phosphothreonine is present on threonine 30. The Q motif motif lies at lysine 73–glutamate 101. The 171-residue stretch at threonine 106–isoleucine 276 folds into the Helicase ATP-binding domain. Serine 119–threonine 126 is a binding site for ATP. Residues aspartate 223 to aspartate 226 carry the DEAD box motif. The region spanning asparagine 287 to isoleucine 455 is the Helicase C-terminal domain.

The protein belongs to the DEAD box helicase family. DDX19/DBP5 subfamily.

Its subcellular location is the cytoplasm. The protein localises to the nucleus. It is found in the nucleoplasm. It carries out the reaction ATP + H2O = ADP + phosphate + H(+). Its function is as follows. ATP-dependent RNA helicase involved in mRNA export from the nucleus. The protein is DEAD-box helicase Dbp80 (Dbp80) of Drosophila melanogaster (Fruit fly).